A 471-amino-acid polypeptide reads, in one-letter code: UDP-N-acetylmuramate--L-alanine ligase (471 aa).

114-120 provides a ligand contact to ATP; it reads GTHGKTT.

This sequence belongs to the MurCDEF family.

The protein resides in the cytoplasm. It catalyses the reaction UDP-N-acetyl-alpha-D-muramate + L-alanine + ATP = UDP-N-acetyl-alpha-D-muramoyl-L-alanine + ADP + phosphate + H(+). Its pathway is cell wall biogenesis; peptidoglycan biosynthesis. Its function is as follows. Cell wall formation. This is UDP-N-acetylmuramate--L-alanine ligase from Brucella abortus (strain S19).